The chain runs to 512 residues: Monocarboxylate transporter 14 (512 aa).

The Cytoplasmic portion of the chain corresponds to 1-29; that stretch reads MYTSHEDIGYDLEDDRKAKNKKTLKPHPD. 12 consecutive transmembrane segments (helical) span residues 30–50, 76–96, 105–125, 129–149, 161–181, 193–211, 317–337, 355–375, 381–401, 410–430, 446–466, and 476–496; these read IDGGWAWMMVLSSFFVHILIM, WVSSLSMGITLIVGPFIGLFI, AIIGGLVNSLGWVLSAYAANV, FITFGVAAGLGSGMAYLPAVV, LAQGLSTTGTGFGTFLMTVLL, AMFIQGALSLNLCVCGALM, MFVAFIFWALFAYSSFVIPFI, FPLTSIIAILHIFGKVILGAV, ISVWNVFLIANFTLVLSIFLL, LAVICALIGFSSGYFSLMPVV, IIICANGISALLGPPFAGWIF, and FYICGLLYMVGILFLLIQPCI. Residues 497–512 are Cytoplasmic-facing; sequence QMIDQSRRKCIEGAHV.

It belongs to the major facilitator superfamily. Monocarboxylate porter (TC 2.A.1.13) family.

It is found in the cell membrane. Functionally, proton-linked monocarboxylate transporter. May catalyze the transport of monocarboxylates across the plasma membrane. This is Monocarboxylate transporter 14 (Slc16a14) from Mus musculus (Mouse).